Reading from the N-terminus, the 843-residue chain is Beta-mannosidase B (843 aa).

Glu-432 serves as the catalytic Proton donor.

This sequence belongs to the glycosyl hydrolase 2 family. Beta-mannosidase B subfamily.

It catalyses the reaction Hydrolysis of terminal, non-reducing beta-D-mannose residues in beta-D-mannosides.. It functions in the pathway glycan metabolism; N-glycan degradation. In terms of biological role, exoglycosidase that cleaves the single beta-linked mannose residue from the non-reducing end of beta-mannosidic oligosaccharides of various complexity and length. Prefers mannobiose over mannotriose and has no activity against polymeric mannan. Is also severely restricted by galactosyl substitutions at the +1 subsite. Releases the terminal mannose residue from mannobiose, mannotriose and galactosyl-mannotriose (GM3), but not from galactosyl-mannobiose (GM2) or di-galactosyl-mannopentaose (G2M5). In Emericella nidulans (strain FGSC A4 / ATCC 38163 / CBS 112.46 / NRRL 194 / M139) (Aspergillus nidulans), this protein is Beta-mannosidase B (mndB).